Consider the following 121-residue polypeptide: MAALGTWLSSVRRLHCSVVARAGGQWRLQQGLAANPSGYGPLTELPDWSFADGRPAPPMKGQLRRKAQREKLARRVVLLTQEMDAGIQAWKLRQQKLQEERKKEHDLKPKGTLLRSPLPNQ.

A mitochondrion-targeting transit peptide spans M1–A22. Positions Q98–P109 are enriched in basic and acidic residues. The segment at Q98–Q121 is disordered.

It belongs to the mitochondrion-specific ribosomal protein mL52 family. Component of the mitochondrial ribosome large subunit (39S) which comprises a 16S rRNA and about 50 distinct proteins.

The protein localises to the mitochondrion. This chain is Large ribosomal subunit protein mL52 (Mrpl52), found in Mus musculus (Mouse).